Consider the following 219-residue polypeptide: Ribose-5-phosphate isomerase A (219 aa).

Substrate-binding positions include 28–31 (SGST), 81–84 (DGAD), and 94–97 (KGGG). The Proton acceptor role is filled by Glu-103. Residue Lys-121 coordinates substrate.

The protein belongs to the ribose 5-phosphate isomerase family. Homodimer.

The enzyme catalyses aldehydo-D-ribose 5-phosphate = D-ribulose 5-phosphate. It participates in carbohydrate degradation; pentose phosphate pathway; D-ribose 5-phosphate from D-ribulose 5-phosphate (non-oxidative stage): step 1/1. Functionally, catalyzes the reversible conversion of ribose-5-phosphate to ribulose 5-phosphate. This Haemophilus influenzae (strain 86-028NP) protein is Ribose-5-phosphate isomerase A.